A 414-amino-acid chain; its full sequence is TnpB-like protein MJ1635 (414 aa).

4 residues coordinate Zn(2+): Cys329, Cys332, Cys346, and Cys349.

In the N-terminal section; belongs to the transposase 2 family. The protein in the C-terminal section; belongs to the transposase 35 family.

In Methanocaldococcus jannaschii (strain ATCC 43067 / DSM 2661 / JAL-1 / JCM 10045 / NBRC 100440) (Methanococcus jannaschii), this protein is TnpB-like protein MJ1635.